Here is a 229-residue protein sequence, read N- to C-terminus: Ribonuclease 3 (229 aa).

The RNase III domain occupies 4–133 (WEELQESVGF…FIGALYLDNG (130 aa)). A Mg(2+)-binding site is contributed by glutamate 46. The active site involves aspartate 50. Mg(2+)-binding residues include aspartate 119 and glutamate 122. The active site involves glutamate 122. The DRBM domain occupies 159 to 228 (DYKTQLQEIV…AQFAINQLTH (70 aa)).

Belongs to the ribonuclease III family. In terms of assembly, homodimer. It depends on Mg(2+) as a cofactor.

It localises to the cytoplasm. The enzyme catalyses Endonucleolytic cleavage to 5'-phosphomonoester.. Functionally, digests double-stranded RNA. Involved in the processing of primary rRNA transcript to yield the immediate precursors to the large and small rRNAs (23S and 16S). Processes some mRNAs, and tRNAs when they are encoded in the rRNA operon. Processes pre-crRNA and tracrRNA of type II CRISPR loci if present in the organism. In Listeria monocytogenes serotype 4a (strain HCC23), this protein is Ribonuclease 3.